A 409-amino-acid chain; its full sequence is Glycosyltransferase GtfE (409 aa).

This sequence belongs to the glycosyltransferase 28 family.

The protein operates within antibiotic biosynthesis; vancomycin biosynthesis. In terms of biological role, D-glucosyltransferase that acts on the aglycone core, transferring D-glucose to the phenolic hydroxyl of OH-Phegly(4) to form a devancoaminyl-vancomycin (DVV) intermediate in the biosynthesis of glycopeptide antibiotic vancomycin. Also able to glycosylate A47934, an antibiotic with a teicoplanin-like heptapeptide, but lacking sugar residues. The protein is Glycosyltransferase GtfE (gtfE) of Amycolatopsis orientalis (Nocardia orientalis).